Here is a 218-residue protein sequence, read N- to C-terminus: Small ribosomal subunit protein uS7 (218 aa).

This sequence belongs to the universal ribosomal protein uS7 family. Part of the 30S ribosomal subunit.

Its function is as follows. One of the primary rRNA binding proteins, it binds directly to 16S rRNA where it nucleates assembly of the head domain of the 30S subunit. Is located at the subunit interface close to the decoding center. The polypeptide is Small ribosomal subunit protein uS7 (rps7) (Pyrococcus horikoshii (strain ATCC 700860 / DSM 12428 / JCM 9974 / NBRC 100139 / OT-3)).